We begin with the raw amino-acid sequence, 350 residues long: Uroporphyrinogen decarboxylase (350 aa).

Residues 28–32, D78, Y154, T209, and H325 each bind substrate; that span reads RQAGR.

Belongs to the uroporphyrinogen decarboxylase family. In terms of assembly, homodimer.

The protein resides in the cytoplasm. It carries out the reaction uroporphyrinogen III + 4 H(+) = coproporphyrinogen III + 4 CO2. It participates in porphyrin-containing compound metabolism; protoporphyrin-IX biosynthesis; coproporphyrinogen-III from 5-aminolevulinate: step 4/4. Catalyzes the decarboxylation of four acetate groups of uroporphyrinogen-III to yield coproporphyrinogen-III. This Nitrobacter hamburgensis (strain DSM 10229 / NCIMB 13809 / X14) protein is Uroporphyrinogen decarboxylase.